The chain runs to 102 residues: Large ribosomal subunit protein uL24 (102 aa).

Belongs to the universal ribosomal protein uL24 family. In terms of assembly, part of the 50S ribosomal subunit.

Functionally, one of two assembly initiator proteins, it binds directly to the 5'-end of the 23S rRNA, where it nucleates assembly of the 50S subunit. One of the proteins that surrounds the polypeptide exit tunnel on the outside of the subunit. This chain is Large ribosomal subunit protein uL24, found in Leuconostoc citreum (strain KM20).